The primary structure comprises 208 residues: Protein GrpE (208 aa).

Residues 1–62 (MTEKDESVKS…ETAVDPKDEE (62 aa)) are disordered. A compositionally biased stretch (acidic residues) spans 46–55 (SNEESSEETA).

The protein belongs to the GrpE family. As to quaternary structure, homodimer.

It is found in the cytoplasm. In terms of biological role, participates actively in the response to hyperosmotic and heat shock by preventing the aggregation of stress-denatured proteins, in association with DnaK and GrpE. It is the nucleotide exchange factor for DnaK and may function as a thermosensor. Unfolded proteins bind initially to DnaJ; upon interaction with the DnaJ-bound protein, DnaK hydrolyzes its bound ATP, resulting in the formation of a stable complex. GrpE releases ADP from DnaK; ATP binding to DnaK triggers the release of the substrate protein, thus completing the reaction cycle. Several rounds of ATP-dependent interactions between DnaJ, DnaK and GrpE are required for fully efficient folding. This is Protein GrpE from Staphylococcus haemolyticus (strain JCSC1435).